The sequence spans 332 residues: 3-dehydrosphinganine reductase (332 aa).

The N-terminal stretch at 1-25 (MLLVVAAFIVAFVLLLYMISPLISP) is a signal peptide. NADPH-binding residues include glycine 39, serine 41, serine 42, glycine 43, arginine 64, aspartate 65, lysine 68, and aspartate 93. The short motif at 39–43 (GGSSG) is the GXSXG element. Catalysis depends on serine 172, which acts as the Proton donor. The Proton acceptor role is filled by tyrosine 186. Residues tyrosine 186 and lysine 190 each contribute to the NADP(+) site. Lysine 190 (lowers pKa of active site Tyr) is an active-site residue.

Belongs to the short-chain dehydrogenases/reductases (SDR) family.

It is found in the endoplasmic reticulum. The enzyme catalyses sphinganine + NADP(+) = 3-oxosphinganine + NADPH + H(+). It participates in lipid metabolism; sphingolipid metabolism. In terms of biological role, catalyzes the reduction of 3'-oxosphinganine (3-ketodihydrosphingosine/KDS) to sphinganine (dihydrosphingosine/DHS), the second step of de novo sphingolipid biosynthesis. This is 3-dehydrosphinganine reductase (kdsr) from Danio rerio (Zebrafish).